A 1327-amino-acid chain; its full sequence is uncharacterized protein (1327 aa).

Substrate is bound at residue 884-885 (WD). Residue glutamate 1023 is the Proton donor of the active site. 1143 to 1144 (KQ) contacts substrate.

The protein in the N-terminal section; belongs to the trehalose phosphatase family. In the C-terminal section; belongs to the glycosyl hydrolase 65 family.

This is an uncharacterized protein from Mycobacterium tuberculosis (strain CDC 1551 / Oshkosh).